The following is a 45-amino-acid chain: Large ribosomal subunit protein bL34c (45 aa).

Positions 1 to 21 (MIQRTLTGTNRKKTKRSGFRS) are disordered. Over residues 10–19 (NRKKTKRSGF) the composition is skewed to basic residues.

Belongs to the bacterial ribosomal protein bL34 family.

It is found in the plastid. The protein resides in the chloroplast. The chain is Large ribosomal subunit protein bL34c (rpl34) from Cyanidium caldarium (Red alga).